Consider the following 358-residue polypeptide: UDP-N-acetylglucosamine--N-acetylmuramyl-(pentapeptide) pyrophosphoryl-undecaprenol N-acetylglucosamine transferase (358 aa).

UDP-N-acetyl-alpha-D-glucosamine-binding positions include 11-13 (TAG), Asn125, Arg162, Ser196, and Gln288.

This sequence belongs to the glycosyltransferase 28 family. MurG subfamily.

The protein localises to the cell membrane. It carries out the reaction di-trans,octa-cis-undecaprenyl diphospho-N-acetyl-alpha-D-muramoyl-L-alanyl-D-glutamyl-meso-2,6-diaminopimeloyl-D-alanyl-D-alanine + UDP-N-acetyl-alpha-D-glucosamine = di-trans,octa-cis-undecaprenyl diphospho-[N-acetyl-alpha-D-glucosaminyl-(1-&gt;4)]-N-acetyl-alpha-D-muramoyl-L-alanyl-D-glutamyl-meso-2,6-diaminopimeloyl-D-alanyl-D-alanine + UDP + H(+). It participates in cell wall biogenesis; peptidoglycan biosynthesis. Functionally, cell wall formation. Catalyzes the transfer of a GlcNAc subunit on undecaprenyl-pyrophosphoryl-MurNAc-pentapeptide (lipid intermediate I) to form undecaprenyl-pyrophosphoryl-MurNAc-(pentapeptide)GlcNAc (lipid intermediate II). This is UDP-N-acetylglucosamine--N-acetylmuramyl-(pentapeptide) pyrophosphoryl-undecaprenol N-acetylglucosamine transferase from Leifsonia xyli subsp. xyli (strain CTCB07).